Reading from the N-terminus, the 49-residue chain is Large ribosomal subunit protein bL33 (49 aa).

The protein belongs to the bacterial ribosomal protein bL33 family.

This is Large ribosomal subunit protein bL33 from Desulfitobacterium hafniense (strain Y51).